The sequence spans 393 residues: METFLFTSESVNEGHPDKLCDQISDAVLDACLEQDPESKVACETCTKTNLVMVFGEITTKAIVDYEKIVRDTCRNIGFVSDDVGLDADNCKVLVYIEQQSPDIAQGVHGHLTKRPEEIGAGDQGHMFGYATDETPELMPLSHVLATKLGARLTEVRKNGTCRWLKPDGKTQVTVEYCNDNGAMIPIRVHTVLISTQHDETVTNDEIARDLKEHAIKPVIPEKYLDEKTIFHLNPSGRFVIGGPHGDAGLTGRKIIIDTYGGWGAHGGGAFSGKDPTKVDRSGAYIVRQAAKSIVASGLARRCIVQVSYAIGVPEPLSVFVDTYGTGKIPDREILKIVKENFDFRPGMMSINLDLKRGGNGRFLKTAAYGHFGRDDADFTWEVVKPLKWENPQD.

A Mg(2+)-binding site is contributed by Glu9. His15 is an ATP binding site. Glu43 is a binding site for K(+). L-methionine contacts are provided by Glu56 and Gln99. Residues 167–169 (DGK), 235–238 (SGRF), Asp246, 252–253 (RK), Ala269, Lys273, and Lys277 each bind ATP. Asp246 lines the L-methionine pocket. An L-methionine-binding site is contributed by Lys277.

This sequence belongs to the AdoMet synthase family. Homotetramer. The cofactor is Mn(2+). Mg(2+) serves as cofactor. It depends on Co(2+) as a cofactor. Requires K(+) as cofactor.

It localises to the cytoplasm. The enzyme catalyses L-methionine + ATP + H2O = S-adenosyl-L-methionine + phosphate + diphosphate. It participates in amino-acid biosynthesis; S-adenosyl-L-methionine biosynthesis; S-adenosyl-L-methionine from L-methionine: step 1/1. Its function is as follows. Catalyzes the formation of S-adenosylmethionine from methionine and ATP. The reaction comprises two steps that are both catalyzed by the same enzyme: formation of S-adenosylmethionine (AdoMet) and triphosphate, and subsequent hydrolysis of the triphosphate. The protein is S-adenosylmethionine synthase (SAMS) of Solanum palustre (Non-tuber-performing potato).